A 37-amino-acid chain; its full sequence is Non-specific lipid-transfer protein P4 (37 aa).

This sequence belongs to the plant LTP family.

Its subcellular location is the secreted. Plant non-specific lipid-transfer proteins transfer phospholipids as well as galactolipids across membranes. May play a role in wax or cutin deposition in the cell walls of expanding epidermal cells and certain secretory tissues. This Vitis sp. (Grape) protein is Non-specific lipid-transfer protein P4.